We begin with the raw amino-acid sequence, 476 residues long: Ribulose bisphosphate carboxylase large chain (476 aa).

Residues methionine 1–serine 2 constitute a propeptide that is removed on maturation. N-acetylproline is present on proline 3. Lysine 14 carries the post-translational modification N6,N6,N6-trimethyllysine. Residues asparagine 123 and threonine 173 each contribute to the substrate site. Lysine 175 acts as the Proton acceptor in catalysis. Residue lysine 177 participates in substrate binding. Mg(2+) contacts are provided by lysine 201, aspartate 203, and glutamate 204. Lysine 201 bears the N6-carboxylysine mark. Histidine 294 acts as the Proton acceptor in catalysis. Arginine 295, histidine 327, and serine 379 together coordinate substrate.

Belongs to the RuBisCO large chain family. Type I subfamily. Heterohexadecamer of 8 large chains and 8 small chains; disulfide-linked. The disulfide link is formed within the large subunit homodimers. Requires Mg(2+) as cofactor. The disulfide bond which can form in the large chain dimeric partners within the hexadecamer appears to be associated with oxidative stress and protein turnover.

The protein resides in the plastid. Its subcellular location is the chloroplast. It catalyses the reaction 2 (2R)-3-phosphoglycerate + 2 H(+) = D-ribulose 1,5-bisphosphate + CO2 + H2O. The catalysed reaction is D-ribulose 1,5-bisphosphate + O2 = 2-phosphoglycolate + (2R)-3-phosphoglycerate + 2 H(+). Its function is as follows. RuBisCO catalyzes two reactions: the carboxylation of D-ribulose 1,5-bisphosphate, the primary event in carbon dioxide fixation, as well as the oxidative fragmentation of the pentose substrate in the photorespiration process. Both reactions occur simultaneously and in competition at the same active site. The sequence is that of Ribulose bisphosphate carboxylase large chain from Setaria italica (Foxtail millet).